The chain runs to 86 residues: MQDELFETEKIPPKNTKNTKNAPKKSFEEHVHSLERAIDRLNDPNLSLKDGMDLYKTAMQELFLAQKLLENAYLEHEKLQTPDQKA.

The tract at residues 1–26 is disordered; it reads MQDELFETEKIPPKNTKNTKNAPKKS.

Belongs to the XseB family. Heterooligomer composed of large and small subunits.

It is found in the cytoplasm. The enzyme catalyses Exonucleolytic cleavage in either 5'- to 3'- or 3'- to 5'-direction to yield nucleoside 5'-phosphates.. Its function is as follows. Bidirectionally degrades single-stranded DNA into large acid-insoluble oligonucleotides, which are then degraded further into small acid-soluble oligonucleotides. This is Exodeoxyribonuclease 7 small subunit from Helicobacter pylori (strain ATCC 700392 / 26695) (Campylobacter pylori).